We begin with the raw amino-acid sequence, 312 residues long: Malate dehydrogenase (312 aa).

NAD(+) contacts are provided by residues 7-13 (GAAGGIG) and Asp-34. Substrate is bound by residues Arg-81 and Arg-87. NAD(+) contacts are provided by residues Asn-94 and 117–119 (ITN). Positions 119 and 153 each coordinate substrate. His-177 serves as the catalytic Proton acceptor. Residue Met-227 coordinates NAD(+).

It belongs to the LDH/MDH superfamily. MDH type 1 family. In terms of assembly, homodimer.

The catalysed reaction is (S)-malate + NAD(+) = oxaloacetate + NADH + H(+). Functionally, catalyzes the reversible oxidation of malate to oxaloacetate. The chain is Malate dehydrogenase from Escherichia coli (strain SE11).